Reading from the N-terminus, the 314-residue chain is ATP synthase gamma chain (314 aa).

The protein belongs to the ATPase gamma chain family. As to quaternary structure, F-type ATPases have 2 components, CF(1) - the catalytic core - and CF(0) - the membrane proton channel. CF(1) has five subunits: alpha(3), beta(3), gamma(1), delta(1), epsilon(1). CF(0) has three main subunits: a, b and c.

Its subcellular location is the cellular thylakoid membrane. Produces ATP from ADP in the presence of a proton gradient across the membrane. The gamma chain is believed to be important in regulating ATPase activity and the flow of protons through the CF(0) complex. This is ATP synthase gamma chain from Gloeothece citriformis (strain PCC 7424) (Cyanothece sp. (strain PCC 7424)).